Reading from the N-terminus, the 120-residue chain is Putative monooxygenase GME11364 (120 aa).

In terms of domain architecture, ABM spans 9–99; it reads VSVHIRLTVD…ILLKPHEVEL (91 aa).

Belongs to the LsrG family.

Its pathway is secondary metabolite biosynthesis. Putative monooxygenase; part of the gene cluster that mediates the biosynthesis of dibenzodioxocinones such as pestalotiollide B, a novel class of inhibitors against cholesterol ester transfer protein (CEPT). The biosynthesis initiates from condensation of acetate and malonate units catalyzed by the non-reducing PKS pks8/GME11356. Pks8/GME11356 lacks a thioesterase (TE) domain, which is important to the cyclizing of the third ring of atrochrysone carboxylic acid, and the esterase GME11355 might play the role of TE and catalyzes the cyclization reaction of the C ring. The lactamase-like protein GME11357 (or other beta-lactamases in Pestalotiopsis microspora) probably hydrolyzes the thioester bond between the ACP of pks8/GME11356 and the intermediate to release atrochrysone carboxylic acid, which is spontaneously dehydrates to form endocrocin anthrone. Endocrocin anthrone is further converted to emodin via the endocrocin intermediate. Emodin is then oxidized by several enzymes such as the Baeyer-Villiger oxidase GME11358, the oxidoreductase GME11367, the short chain dehydrogenase/reductase GME11373, as well as by other oxidoreductases from the cluster, to modify the A and C rings and open the B ring, and finally yield monodictyphenone. The prenyltransferase GME11375 may catalyze the addition reaction between the C5 side chains and the carbon bone of dibenzodioxocinones. The remaining biochemical reactions to the final product dibenzodioxocinones should be methylation catalyzed by methyltransferase GME11366 and reduction and lactonization reaction catalyzed by a series of oxidordeuctases. The chain is Putative monooxygenase GME11364 from Pestalotiopsis microspora.